The chain runs to 548 residues: Chaperonin GroEL (548 aa).

ATP-binding positions include 29–32 (THGP), Lys50, 86–90 (DGTTT), Gly414, and Asp493.

The protein belongs to the chaperonin (HSP60) family. As to quaternary structure, forms a cylinder of 14 subunits composed of two heptameric rings stacked back-to-back. Interacts with the co-chaperonin GroES.

The protein resides in the cytoplasm. It catalyses the reaction ATP + H2O + a folded polypeptide = ADP + phosphate + an unfolded polypeptide.. Its function is as follows. Together with its co-chaperonin GroES, plays an essential role in assisting protein folding. The GroEL-GroES system forms a nano-cage that allows encapsulation of the non-native substrate proteins and provides a physical environment optimized to promote and accelerate protein folding. The chain is Chaperonin GroEL from Desulfatibacillum aliphaticivorans.